The following is a 473-amino-acid chain: 3-isopropylmalate dehydratase large subunit (473 aa).

[4Fe-4S] cluster-binding residues include Cys-351, Cys-414, and Cys-417.

This sequence belongs to the aconitase/IPM isomerase family. LeuC type 1 subfamily. Heterodimer of LeuC and LeuD. Requires [4Fe-4S] cluster as cofactor.

It carries out the reaction (2R,3S)-3-isopropylmalate = (2S)-2-isopropylmalate. It functions in the pathway amino-acid biosynthesis; L-leucine biosynthesis; L-leucine from 3-methyl-2-oxobutanoate: step 2/4. In terms of biological role, catalyzes the isomerization between 2-isopropylmalate and 3-isopropylmalate, via the formation of 2-isopropylmaleate. This chain is 3-isopropylmalate dehydratase large subunit, found in Acidovorax ebreus (strain TPSY) (Diaphorobacter sp. (strain TPSY)).